The sequence spans 347 residues: UDP-N-acetylenolpyruvoylglucosamine reductase (347 aa).

An FAD-binding PCMH-type domain is found at 15–187; sequence FGIEQTCSYL…TAIGLKLPKR (173 aa). Arginine 163 is a catalytic residue. The active-site Proton donor is serine 233. Glutamate 328 is an active-site residue.

Belongs to the MurB family. Requires FAD as cofactor.

It is found in the cytoplasm. The enzyme catalyses UDP-N-acetyl-alpha-D-muramate + NADP(+) = UDP-N-acetyl-3-O-(1-carboxyvinyl)-alpha-D-glucosamine + NADPH + H(+). It functions in the pathway cell wall biogenesis; peptidoglycan biosynthesis. Cell wall formation. The polypeptide is UDP-N-acetylenolpyruvoylglucosamine reductase (Vibrio parahaemolyticus serotype O3:K6 (strain RIMD 2210633)).